The primary structure comprises 168 residues: UPF0178 protein RBAM_023530 (168 aa).

It belongs to the UPF0178 family.

The protein is UPF0178 protein RBAM_023530 of Bacillus velezensis (strain DSM 23117 / BGSC 10A6 / LMG 26770 / FZB42) (Bacillus amyloliquefaciens subsp. plantarum).